A 505-amino-acid chain; its full sequence is Histidine ammonia-lyase (505 aa).

Residues 141–143 constitute a cross-link (5-imidazolinone (Ala-Gly)); the sequence is ASG. S142 is subject to 2,3-didehydroalanine (Ser).

The protein belongs to the PAL/histidase family. Contains an active site 4-methylidene-imidazol-5-one (MIO), which is formed autocatalytically by cyclization and dehydration of residues Ala-Ser-Gly.

The protein resides in the cytoplasm. It carries out the reaction L-histidine = trans-urocanate + NH4(+). It functions in the pathway amino-acid degradation; L-histidine degradation into L-glutamate; N-formimidoyl-L-glutamate from L-histidine: step 1/3. This chain is Histidine ammonia-lyase, found in Bacillus cereus (strain AH187).